Consider the following 493-residue polypeptide: D-glyceraldehyde dehydrogenase (NADP(+)) (493 aa).

NADP(+) is bound by residues 144–147 (TPWN), Arg-155, 170–174 (KPSSD), 202–208 (KGSEIGD), 223–246 (GSTS…ILEL), Cys-279, and 379–381 (EIF). Substrate contacts are provided by Asn-147 and Arg-155. Glu-245 acts as the Proton acceptor in catalysis. Cys-279 contributes to the substrate binding site. The active-site Proton donor is the Cys-279.

It belongs to the aldehyde dehydrogenase family. Glyceraldehyde dehydrogenase subfamily. As to quaternary structure, homotetramer. Dimer of dimers.

The enzyme catalyses D-glyceraldehyde + NADP(+) + H2O = (R)-glycerate + NADPH + 2 H(+). It functions in the pathway carbohydrate degradation; glycolysis. Its activity is regulated as follows. Stable for 2 hours at 60 degrees Celsius but activity is decreased to less than 50 percent within 15 minutes at 70 degrees Celsius. In terms of biological role, NADP-dependent dehydrogenase of the nED (non-phosphorylated Entner-Doudoroff) pathway with highest activity towards glyceraldehydes (e.g. D,L-glyceraldehyde and D-glyceraldehyde), to a lesser extent towards D,L-glyceraldehyde-3-phosphate and glycolaldehyde, but no activity towards aliphatic or aromatic aldehydes. The chain is D-glyceraldehyde dehydrogenase (NADP(+)) from Picrophilus torridus (strain ATCC 700027 / DSM 9790 / JCM 10055 / NBRC 100828 / KAW 2/3).